We begin with the raw amino-acid sequence, 153 residues long: uncharacterized protein (153 aa).

The protein belongs to the RusA family.

This is an uncharacterized protein from Xylella fastidiosa (strain Temecula1 / ATCC 700964).